Reading from the N-terminus, the 562-residue chain is Sulfite reductase [NADPH] hemoprotein beta-component (562 aa).

4 residues coordinate [4Fe-4S] cluster: Cys-428, Cys-434, Cys-473, and Cys-477. Cys-477 serves as a coordination point for siroheme.

Belongs to the nitrite and sulfite reductase 4Fe-4S domain family. In terms of assembly, alpha(8)-beta(8). The alpha component is a flavoprotein, the beta component is a hemoprotein. Siroheme is required as a cofactor. Requires [4Fe-4S] cluster as cofactor.

The catalysed reaction is hydrogen sulfide + 3 NADP(+) + 3 H2O = sulfite + 3 NADPH + 4 H(+). It functions in the pathway sulfur metabolism; hydrogen sulfide biosynthesis; hydrogen sulfide from sulfite (NADPH route): step 1/1. Functionally, component of the sulfite reductase complex that catalyzes the 6-electron reduction of sulfite to sulfide. This is one of several activities required for the biosynthesis of L-cysteine from sulfate. The protein is Sulfite reductase [NADPH] hemoprotein beta-component of Myxococcus xanthus (strain DK1622).